The chain runs to 125 residues: Interleukin-6 (125 aa).

A disulfide bridge links cysteine 16 with cysteine 26.

It belongs to the IL-6 superfamily. As to quaternary structure, component of a hexamer of two molecules each of IL6, IL6R and IL6ST; first binds to IL6R to associate with the signaling subunit IL6ST. Interacts with IL6R (via the N-terminal ectodomain); this interaction may be affected by IL6R-binding with SORL1, hence decreasing IL6 cis signaling. Interacts with SORL1 (via the N-terminal ectodomain); this interaction leads to IL6 internalization and lysosomal degradation. May form a trimeric complex with the soluble SORL1 ectodomain and soluble IL6R receptor; this interaction might stabilize circulating IL6, hence promoting IL6 trans signaling.

It localises to the secreted. Cytokine with a wide variety of biological functions in immunity, tissue regeneration, and metabolism. Binds to IL6R, then the complex associates to the signaling subunit IL6ST/gp130 to trigger the intracellular IL6-signaling pathway. The interaction with the membrane-bound IL6R and IL6ST stimulates 'classic signaling', whereas the binding of IL6 and soluble IL6R to IL6ST stimulates 'trans-signaling'. Alternatively, 'cluster signaling' occurs when membrane-bound IL6:IL6R complexes on transmitter cells activate IL6ST receptors on neighboring receiver cells. In terms of biological role, IL6 is a potent inducer of the acute phase response. Rapid production of IL6 contributes to host defense during infection and tissue injury, but excessive IL6 synthesis is involved in disease pathology. In the innate immune response, is synthesized by myeloid cells, such as macrophages and dendritic cells, upon recognition of pathogens through toll-like receptors (TLRs) at the site of infection or tissue injury. In the adaptive immune response, is required for the differentiation of B cells into immunoglobulin-secreting cells. Plays a major role in the differentiation of CD4(+) T cell subsets. Essential factor for the development of T follicular helper (Tfh) cells that are required for the induction of germinal-center formation. Required to drive naive CD4(+) T cells to the Th17 lineage. Also required for proliferation of myeloma cells and the survival of plasmablast cells. Functionally, acts as an essential factor in bone homeostasis and on vessels directly or indirectly by induction of VEGF, resulting in increased angiogenesis activity and vascular permeability. Induces, through 'trans-signaling' and synergistically with IL1B and TNF, the production of VEGF. Involved in metabolic controls, is discharged into the bloodstream after muscle contraction increasing lipolysis and improving insulin resistance. 'Trans-signaling' in central nervous system also regulates energy and glucose homeostasis. Mediates, through GLP-1, crosstalk between insulin-sensitive tissues, intestinal L cells and pancreatic islets to adapt to changes in insulin demand. Also acts as a myokine. Plays a protective role during liver injury, being required for maintenance of tissue regeneration. Also has a pivotal role in iron metabolism by regulating HAMP/hepcidin expression upon inflammation or bacterial infection. Through activation of IL6ST-YAP-NOTCH pathway, induces inflammation-induced epithelial regeneration. This Neovison vison (American mink) protein is Interleukin-6 (IL6).